The chain runs to 372 residues: Glycerol-3-phosphate dehydrogenase [NAD(+)] (372 aa).

Over residues 1 to 16 (MAPSELNCTHQNQHSS) the composition is skewed to polar residues. Residues 1 to 23 (MAPSELNCTHQNQHSSGYDGPRS) are disordered. NAD(+)-binding positions include 29 to 34 (GSGNWG), phenylalanine 60, phenylalanine 117, lysine 140, and alanine 173. Residue lysine 140 participates in substrate binding. Residue lysine 225 is the Proton acceptor of the active site. NAD(+)-binding residues include arginine 289, lysine 318, and glutamine 320. 289–290 (RN) contributes to the substrate binding site.

It belongs to the NAD-dependent glycerol-3-phosphate dehydrogenase family.

The enzyme catalyses sn-glycerol 3-phosphate + NAD(+) = dihydroxyacetone phosphate + NADH + H(+). This chain is Glycerol-3-phosphate dehydrogenase [NAD(+)] (GPDH), found in Cuphea lanceolata (Cigar flower).